We begin with the raw amino-acid sequence, 218 residues long: Protein THO1 (218 aa).

An SAP domain is found at 4-38 (YSSLTVVQLKDLLTKRNLSVGGLKNELVQRLIKDD). Phosphoserine is present on serine 22. 2 disordered regions span residues 37-123 (DDEE…LSPE) and 177-218 (LVSR…GYRR). Polar residues predominate over residues 47 to 57 (VSPQEQNQEQG). Serine 58 and serine 68 each carry phosphoserine. Residues 72–96 (TEKKEVSSEPKETNEPKEENKDVQK) show a composition bias toward basic and acidic residues. Low complexity-rich tracts occupy residues 102–122 (SATA…ALSP) and 186–203 (SGNN…NNRS). The segment covering 204 to 218 (RVSKNRRGNRSGYRR) has biased composition (basic residues).

It belongs to the SAP domain-containing ribonucleoprotein family. As to quaternary structure, interacts with SUB2 in the presence of RNA; this interaction facilitates RNA binding of SUB2.

Facilitates RNA binding of SUB2 and likely plays a role in mRNA export. Suppressor of the transcriptional defect of HPR1 by overexpression. The polypeptide is Protein THO1 (THO1) (Saccharomyces cerevisiae (strain ATCC 204508 / S288c) (Baker's yeast)).